The primary structure comprises 295 residues: MLMQIKMDNHPFNFQPILASHSMTRDSTKPKKMTDTAFVPSPPVGFIKEENKADLHTISVVASNVTLPQIQLPKIATLEEPGYESRTGSLTDLSGRRNSVNIGALCEDVPNTAGPHIARPVTINNLIPPSLPRLNTYQLRPQLSDTHLNCHFNSNPYTTASHAPFESSYTTASTFTSQPAASYFPSNSTPATRKNSATTNLPSEERRRVSVSLSEQVFNEGERYNNDGQLIGKTGKPLRNTKRAAQNRSAQKAFRQRREKYIKNLEEKSKLFDGLMKENSELKKMIESLKSKLKE.

Serine 85, serine 89, and serine 196 each carry phosphoserine. A compositionally biased stretch (polar residues) spans alanine 181–proline 202. The tract at residues alanine 181–glutamate 205 is disordered. Residues proline 237–glutamate 295 enclose the bZIP domain. The basic motif stretch occupies residues arginine 239–lysine 260. The tract at residues isoleucine 262–leucine 271 is leucine-zipper.

The protein belongs to the bZIP family. YAP subfamily. As to quaternary structure, homodimer.

The protein localises to the cytoplasm. Its subcellular location is the nucleus. In terms of biological role, transcription activator involved in the regulation of genes expressed in response to environmental changes and metabolic requirements. According to genome-wide promoter binding and gene expression studies it regulates, among others, genes involved in ribosome biogenesis, and protein synthesis. It may also be involved in pleiotropic drug resistance. When overexpressed it confers increased resistance to cisplatin, the DNA-alkylating agents methylmethanosulfonate, and mitomycin C, the antimalarial drugs quinidine, mefloquine, and chloroquine, and increases cellular tolerance to sodium and lithium. Preferentially binds 5'-TTACTAA-3'. This is AP-1-like transcription factor YAP4 (CIN5) from Saccharomyces cerevisiae (strain ATCC 204508 / S288c) (Baker's yeast).